The chain runs to 2539 residues: Zinc finger FYVE domain-containing protein 26 (2539 aa).

Phosphoserine occurs at positions 297, 615, 619, and 703. 3 disordered regions span residues 594 to 637 (HLPE…SLGV), 699 to 724 (ISSR…GLQS), and 738 to 806 (WRHK…SLSA). The span at 764-774 (PSLRRGRRTRR) shows a compositional bias: basic residues. The span at 787 to 805 (SLESTSSELSTSTSEGSLS) shows a compositional bias: low complexity. S800 carries the phosphoserine modification. A coiled-coil region spans residues 868–895 (MFMERYQEVIQELAQVEHKIENQNSDAG). The interval 1267–1296 (DLPLSTPSSPRTTENPTLERKPYSSPRDSS) is disordered. Residues 1271–1282 (STPSSPRTTENP) show a composition bias toward polar residues. Residues S1742, S1764, S1780, and S1782 each carry the phosphoserine modification. A disordered region spans residues 1754–1808 (ADPETLPRSPSAEFSPAAPPGISSIHSPSLRERSFPPTQPSQEFVPPATPPARHQ). Low complexity predominate over residues 1760-1769 (PRSPSAEFSP). The FYVE-type zinc finger occupies 1812–1872 (DETESICMVC…VCDQCYSYCN (61 aa)). The Zn(2+) site is built by C1818, C1821, C1835, C1838, C1843, C1846, C1864, and C1867.

Interacts with AP5Z1, AP5B1, AP5S1 and SPG11. Interacts with TTC19 and KIF13A. As to expression, strongest expression in the adrenal gland, bone marrow, adult brain, fetal brain, lung, placenta, prostate, skeletal muscle, testis, thymus, and retina. Intermediate levels are detected in other structures, including the spinal cord.

It is found in the cytoplasm. The protein resides in the cytoskeleton. The protein localises to the microtubule organizing center. Its subcellular location is the centrosome. It localises to the midbody. Phosphatidylinositol 3-phosphate-binding protein required for the abscission step in cytokinesis: recruited to the midbody during cytokinesis and acts as a regulator of abscission. May also be required for efficient homologous recombination DNA double-strand break repair. This chain is Zinc finger FYVE domain-containing protein 26 (ZFYVE26), found in Homo sapiens (Human).